A 281-amino-acid chain; its full sequence is Glutamate racemase (281 aa).

Residues 10–11 (DS) and 42–43 (YG) contribute to the substrate site. Cys74 functions as the Proton donor/acceptor in the catalytic mechanism. Residue 75-76 (NT) coordinates substrate. Catalysis depends on Cys190, which acts as the Proton donor/acceptor. 191–192 (TH) contacts substrate.

It belongs to the aspartate/glutamate racemases family.

It catalyses the reaction L-glutamate = D-glutamate. The protein operates within cell wall biogenesis; peptidoglycan biosynthesis. Functionally, provides the (R)-glutamate required for cell wall biosynthesis. In Oenococcus oeni (strain ATCC BAA-331 / PSU-1), this protein is Glutamate racemase.